We begin with the raw amino-acid sequence, 206 residues long: Thymidylate kinase (206 aa).

Residue 11-18 coordinates ATP; that stretch reads GPEGAGKT.

Belongs to the thymidylate kinase family.

It catalyses the reaction dTMP + ATP = dTDP + ADP. In terms of biological role, phosphorylation of dTMP to form dTDP in both de novo and salvage pathways of dTTP synthesis. The chain is Thymidylate kinase (tmk) from Deinococcus radiodurans (strain ATCC 13939 / DSM 20539 / JCM 16871 / CCUG 27074 / LMG 4051 / NBRC 15346 / NCIMB 9279 / VKM B-1422 / R1).